The sequence spans 273 residues: Hydroxyethylthiazole kinase 2 (273 aa).

Methionine 45 contacts substrate. Lysine 120 and threonine 173 together coordinate ATP. Glycine 200 serves as a coordination point for substrate.

Belongs to the Thz kinase family. Mg(2+) is required as a cofactor.

It catalyses the reaction 5-(2-hydroxyethyl)-4-methylthiazole + ATP = 4-methyl-5-(2-phosphooxyethyl)-thiazole + ADP + H(+). It functions in the pathway cofactor biosynthesis; thiamine diphosphate biosynthesis; 4-methyl-5-(2-phosphoethyl)-thiazole from 5-(2-hydroxyethyl)-4-methylthiazole: step 1/1. In terms of biological role, catalyzes the phosphorylation of the hydroxyl group of 4-methyl-5-beta-hydroxyethylthiazole (THZ). This chain is Hydroxyethylthiazole kinase 2, found in Leuconostoc mesenteroides subsp. mesenteroides (strain ATCC 8293 / DSM 20343 / BCRC 11652 / CCM 1803 / JCM 6124 / NCDO 523 / NBRC 100496 / NCIMB 8023 / NCTC 12954 / NRRL B-1118 / 37Y).